The chain runs to 97 residues: uncharacterized protein (97 aa).

This is an uncharacterized protein from Mycoplasma capricolum subsp. capricolum (strain California kid / ATCC 27343 / NCTC 10154).